The following is a 131-amino-acid chain: Small ribosomal subunit protein bS6 (131 aa).

Residues 97–131 (TEASPMVKAKDERRRDVAEDLDEEEVDDVAEDSEE) form a disordered region. Residues 104–114 (KAKDERRRDVA) show a composition bias toward basic and acidic residues. Residues 115 to 131 (EDLDEEEVDDVAEDSEE) show a composition bias toward acidic residues.

It belongs to the bacterial ribosomal protein bS6 family.

Binds together with bS18 to 16S ribosomal RNA. This is Small ribosomal subunit protein bS6 from Proteus mirabilis (strain HI4320).